The following is a 1203-amino-acid chain: Protein patched homolog 2 (1203 aa).

Residues 1–57 (MTRSPPLRELPPSYTPPARTAAPQILAGSLKAPLWLRAYFQGLLFSLGCGIQRHCGK) are Cytoplasmic-facing. A helical transmembrane segment spans residues 58 to 78 (VLFLGLLAFGALALGLRMAII). The Extracellular segment spans residues 79–392 (ETNLEQLWVE…LDDILHAFSE (314 aa)). Asn370 carries an N-linked (GlcNAc...) asparagine glycan. Residues 393 to 413 (VSAARVVGGYLLMLAYACVTM) traverse the membrane as a helical segment. In terms of domain architecture, SSD spans 394 to 552 (SAARVVGGYL…MLVFPAILSL (159 aa)). Over 414 to 428 (LRWDCAQSQGSVGLA) the chain is Cytoplasmic. A helical membrane pass occupies residues 429-449 (GVLLVALAVASGLGLCALLGI). The Extracellular segment spans residues 450–457 (TFNAATTQ). Residues 458 to 478 (VLPFLALGIGVDDVFLLAHAF) form a helical membrane-spanning segment. Topologically, residues 479–501 (TEALPGTPLQERMGECLQRTGTS) are cytoplasmic. Residues 502–522 (VVLTSINNMAAFLMAALVPIP) form a helical membrane-spanning segment. At 523–531 (ALRAFSLQA) the chain is on the extracellular side. Residues 532-552 (AIVVGCTFVAVMLVFPAILSL) form a helical membrane-spanning segment. The Cytoplasmic portion of the chain corresponds to 553–686 (DLRRRHCQRL…APLLLQSHAK (134 aa)). Residues 687–707 (AIVLVLFGALLGLSLYGATLV) traverse the membrane as a helical segment. The Extracellular segment spans residues 708–963 (QDGLALTDVV…WEQYLGLRRC (256 aa)). Asn812 carries an N-linked (GlcNAc...) asparagine glycan. A helical transmembrane segment spans residues 964-984 (FLLAVCILLVCTFLVCALLLL). Topologically, residues 985 to 991 (NPWTAGL) are cytoplasmic. Residues 992-1012 (IVLVLAMMTVELFGIMGFLGI) traverse the membrane as a helical segment. Position 1013 (Lys1013) is a topological domain, extracellular. The chain crosses the membrane as a helical span at residues 1014 to 1034 (LSAIPVVILVASVGIGVEFTV). Residues 1035–1064 (HVALGFLTTQGSRNLRAAHALEHTFAPVTD) lie on the Cytoplasmic side of the membrane. The chain crosses the membrane as a helical span at residues 1065–1085 (GAISTLLGLLMLAGSHFDFIV). The Extracellular portion of the chain corresponds to 1086–1093 (RYFFAALT). The chain crosses the membrane as a helical span at residues 1094 to 1114 (VLTLLGLLHGLVLLPVLLSIL). The Cytoplasmic segment spans residues 1115-1203 (GPPPEVIQMY…SSRGPGPATG (89 aa)). Positions 1171 to 1203 (GAYIHPAPDEPPWSPAATSSGNLSSRGPGPATG) are disordered. The segment covering 1186–1195 (AATSSGNLSS) has biased composition (polar residues).

The protein belongs to the patched family.

It localises to the membrane. Functionally, plays a role in the control of cellular growth. May have a role in epidermal development. May act as a receptor for Sonic hedgehog (SHH). This Homo sapiens (Human) protein is Protein patched homolog 2 (PTCH2).